The chain runs to 69 residues: Consomatin Be1 (69 aa).

The signal sequence occupies residues 1–22 (MEMAYWVMVMMMVWITAPLSEG). The propeptide occupies 23-57 (GKLNDVIRALAPDDVTPQFILRSLISRRRSDSDVR). A 4-carboxyglutamate modification is found at glutamate 58. Cysteine 62 and cysteine 67 are oxidised to a cystine. Tryptophan 64 bears the D-tryptophan mark. A 4-hydroxyproline mark is found at proline 68 and proline 69.

Belongs to the conotoxin C superfamily. Consomatin family. As to expression, expressed by the venom duct.

The protein localises to the secreted. Functionally, moderately activates human somatostatin receptors (SSTR) with a preferential activation of SSTR1 and SSTR4. In vivo, does not cause behavioral changes in mice within a few minutes of intracranial injection, but causes a progressive loss of movement thereafter. Four to five hours after injection, mice recover, even with the highest dose tested. Shows antinociception and antihyperalgesia activities in two mouse models of acute pain, most probably by acting outside the central nervous system. This Conus betulinus (Beech cone) protein is Consomatin Be1.